A 96-amino-acid chain; its full sequence is Small ubiquitin-related modifier 2 (96 aa).

Residue K11 forms a Glycyl lysine isopeptide (Lys-Gly) (interchain with G-Cter in SUMO) linkage. In terms of domain architecture, Ubiquitin-like spans 16 to 96 (DHINLKVAGQ…FQQQTGGHRI (81 aa)). Residue G93 forms a Glycyl lysine isopeptide (Gly-Lys) (interchain with K-? in acceptor proteins) linkage. A propeptide spanning residues 94 to 96 (HRI) is cleaved from the precursor.

The protein belongs to the ubiquitin family. SUMO subfamily. As to quaternary structure, interacts with sae2 and ube2i. Covalently attached to a number of proteins. In terms of processing, polymeric chains can be formed through Lys-11 cross-linking. Cleavage of precursor form by a sentrin-specific protease is necessary for function.

Its subcellular location is the nucleus. Ubiquitin-like protein that can be covalently attached to proteins as a monomer or as a lysine-linked polymer. Covalent attachment via an isopeptide bond to its substrates requires prior activation by the E1 complex sae1-sae2 and linkage to the E2 enzyme ube2i, and can be promoted by an E3 ligase such as pias1-4. This post-translational modification on lysine residues of proteins plays a crucial role in a number of cellular processes such as nuclear transport, DNA replication and repair, mitosis and signal transduction. Polymeric sumo2 chains are also susceptible to polyubiquitination which functions as a signal for proteasomal degradation of modified proteins. The sequence is that of Small ubiquitin-related modifier 2 from Danio rerio (Zebrafish).